A 480-amino-acid polypeptide reads, in one-letter code: Chromosomal replication initiator protein DnaA (480 aa).

The segment at 1 to 71 is domain I, interacts with DnaA modulators; that stretch reads MNLTKVWNTT…REQLGSVVGF (71 aa). Positions 71–139 are domain II; the sequence is FPVDVRIVLA…LELHRAVRSS (69 aa). A disordered region spans residues 91–115; that stretch reads SINGRHAARDTRKSDHHAPLSGGYG. Residues 97-108 are compositionally biased toward basic and acidic residues; sequence AARDTRKSDHHA. The interval 140 to 356 is domain III, AAA+ region; the sequence is MLNPRYTFDR…GCLNRVTAYA (217 aa). ATP-binding residues include glycine 184, glycine 186, lysine 187, and threonine 188. The domain IV, binds dsDNA stretch occupies residues 357–480; it reads QMYNIPVTIE…IRERLMNSAV (124 aa).

The protein belongs to the DnaA family. Oligomerizes as a right-handed, spiral filament on DNA at oriC.

The protein localises to the cytoplasm. In terms of biological role, plays an essential role in the initiation and regulation of chromosomal replication. ATP-DnaA binds to the origin of replication (oriC) to initiate formation of the DNA replication initiation complex once per cell cycle. Binds the DnaA box (a 9 base pair repeat at the origin) and separates the double-stranded (ds)DNA. Forms a right-handed helical filament on oriC DNA; dsDNA binds to the exterior of the filament while single-stranded (ss)DNA is stabiized in the filament's interior. The ATP-DnaA-oriC complex binds and stabilizes one strand of the AT-rich DNA unwinding element (DUE), permitting loading of DNA polymerase. After initiation quickly degrades to an ADP-DnaA complex that is not apt for DNA replication. Binds acidic phospholipids. The sequence is that of Chromosomal replication initiator protein DnaA from Roseiflexus castenholzii (strain DSM 13941 / HLO8).